The sequence spans 182 residues: MNVRNNTKLITINALLLAIGVILHQITPVLGLPMQPDFAITMLFIIIILNDNFKITMVSGTLMGIFTAMTTKFPGGQLPNVVDKIFTALIVFLFIALIKKSNILGRLSVEKRNNILMAIVLPLGTLVSGILFLGTAKIIVGLPASFSILFLTVVVPSVALNTVIGLVLYRIVEKSLRRASLL.

A run of 4 helical transmembrane segments spans residues 10–32 (ITIN…VLGL), 55–75 (ITMV…KFPG), 119–141 (IVLP…IIVG), and 146–168 (FSIL…GLVL).

Belongs to the vitamin uptake transporter (VUT/ECF) (TC 2.A.88) family. TrpP subfamily.

Its subcellular location is the cell membrane. Probably involved in tryptophan uptake. This is Probable tryptophan transport protein (trpP) from Clostridium perfringens (strain 13 / Type A).